The chain runs to 476 residues: tRNA (cytosine(72)-C(5))-methyltransferase NSUN6 (476 aa).

A PUA domain is found at 111-203; sequence QGEVIVGAQC…IGIRMTEPIY (93 aa). S-adenosyl-L-methionine-binding positions include 242–248, Asp266, Asp293, and Asp323; that span reads CAAPGGK. Cys373 acts as the Nucleophile in catalysis. Residue Lys419 is modified to N6-acetyllysine.

The protein belongs to the class I-like SAM-binding methyltransferase superfamily. RsmB/NOP family.

It is found in the cytoplasm. The catalysed reaction is cytidine(72) in tRNA(Thr) + S-adenosyl-L-methionine = 5-methylcytidine(72) in tRNA(Thr) + S-adenosyl-L-homocysteine + H(+). It catalyses the reaction cytidine(72) in tRNA(Cys) + S-adenosyl-L-methionine = 5-methylcytidine(72) in tRNA(Cys) + S-adenosyl-L-homocysteine + H(+). Its function is as follows. S-adenosyl-L-methionine-dependent methyltransferase that specifically methylates the C5 position of cytosine 72 in tRNA(Thr)(TGT) and tRNA(Cys)(GCA). In vitro also methylates tRNA(Thr)(AGT). Methylation requires, in the acceptor stem region, the presence of the 3'-CCA terminus, the target site C72, the discriminator base U73, and the second and third base pairs (2:71 and 3:70) in the tRNA substrates. The sequence is that of tRNA (cytosine(72)-C(5))-methyltransferase NSUN6 from Mus musculus (Mouse).